The primary structure comprises 170 residues: Adenine phosphoribosyltransferase (170 aa).

Belongs to the purine/pyrimidine phosphoribosyltransferase family. In terms of assembly, homodimer.

The protein localises to the cytoplasm. It carries out the reaction AMP + diphosphate = 5-phospho-alpha-D-ribose 1-diphosphate + adenine. Its pathway is purine metabolism; AMP biosynthesis via salvage pathway; AMP from adenine: step 1/1. Functionally, catalyzes a salvage reaction resulting in the formation of AMP, that is energically less costly than de novo synthesis. The polypeptide is Adenine phosphoribosyltransferase (Thermotoga sp. (strain RQ2)).